The following is a 225-amino-acid chain: Cytidylate kinase (225 aa).

Residue 12 to 20 coordinates ATP; sequence GPSGAGKGT.

It belongs to the cytidylate kinase family. Type 1 subfamily.

It localises to the cytoplasm. The enzyme catalyses CMP + ATP = CDP + ADP. It carries out the reaction dCMP + ATP = dCDP + ADP. The chain is Cytidylate kinase from Proteus mirabilis (strain HI4320).